Consider the following 151-residue polypeptide: uncharacterized protein (151 aa).

This is an uncharacterized protein from Bacillus subtilis (strain 168).